The chain runs to 261 residues: Cytochrome c oxidase subunit 3 (261 aa).

The Mitochondrial matrix segment spans residues M1–P15. A helical membrane pass occupies residues W16 to W34. At F35 to T40 the chain is on the mitochondrial intermembrane side. The helical transmembrane segment at L41 to T66 threads the bilayer. Over F67–T72 the chain is Mitochondrial matrix. The chain crosses the membrane as a helical span at residues P73–S105. Topologically, residues L106–E128 are mitochondrial intermembrane. Residues V129–M152 form a helical membrane-spanning segment. Over E153–N155 the chain is Mitochondrial matrix. The chain crosses the membrane as a helical span at residues R156 to E183. The Mitochondrial intermembrane segment spans residues T184–D190. The chain crosses the membrane as a helical span at residues G191–L223. Residues K224–H232 are Mitochondrial matrix-facing. The chain crosses the membrane as a helical span at residues F233–I256. The Mitochondrial intermembrane portion of the chain corresponds to Y257–S261.

It belongs to the cytochrome c oxidase subunit 3 family. Component of the cytochrome c oxidase (complex IV, CIV), a multisubunit enzyme composed of 14 subunits. The complex is composed of a catalytic core of 3 subunits MT-CO1, MT-CO2 and MT-CO3, encoded in the mitochondrial DNA, and 11 supernumerary subunits COX4I, COX5A, COX5B, COX6A, COX6B, COX6C, COX7A, COX7B, COX7C, COX8 and NDUFA4, which are encoded in the nuclear genome. The complex exists as a monomer or a dimer and forms supercomplexes (SCs) in the inner mitochondrial membrane with NADH-ubiquinone oxidoreductase (complex I, CI) and ubiquinol-cytochrome c oxidoreductase (cytochrome b-c1 complex, complex III, CIII), resulting in different assemblies (supercomplex SCI(1)III(2)IV(1) and megacomplex MCI(2)III(2)IV(2)).

It localises to the mitochondrion inner membrane. It catalyses the reaction 4 Fe(II)-[cytochrome c] + O2 + 8 H(+)(in) = 4 Fe(III)-[cytochrome c] + 2 H2O + 4 H(+)(out). In terms of biological role, component of the cytochrome c oxidase, the last enzyme in the mitochondrial electron transport chain which drives oxidative phosphorylation. The respiratory chain contains 3 multisubunit complexes succinate dehydrogenase (complex II, CII), ubiquinol-cytochrome c oxidoreductase (cytochrome b-c1 complex, complex III, CIII) and cytochrome c oxidase (complex IV, CIV), that cooperate to transfer electrons derived from NADH and succinate to molecular oxygen, creating an electrochemical gradient over the inner membrane that drives transmembrane transport and the ATP synthase. Cytochrome c oxidase is the component of the respiratory chain that catalyzes the reduction of oxygen to water. Electrons originating from reduced cytochrome c in the intermembrane space (IMS) are transferred via the dinuclear copper A center (CU(A)) of subunit 2 and heme A of subunit 1 to the active site in subunit 1, a binuclear center (BNC) formed by heme A3 and copper B (CU(B)). The BNC reduces molecular oxygen to 2 water molecules using 4 electrons from cytochrome c in the IMS and 4 protons from the mitochondrial matrix. The chain is Cytochrome c oxidase subunit 3 (MT-CO3) from Felis catus (Cat).